Reading from the N-terminus, the 359-residue chain is MPAHLLQEEISSSYTTTTTITAPSSRVLQNGGGKLEKTPQYVEEDIRPEMKDDIYDPTYQDKEGPRPKLEYVWRNIILMSLLHLGALYGIILIPTCKIYTLLWAFAYYLLSAVGVTAGAHRLWSHRTYKARLPLRVFLIIANTMAFQNDVYEWARDHRAHHKFSETDADPHNSRRGFFFSHVGWLLVRKHPAVKEKGGLLNMSDLKAEKLVMFQRRYYKPGILLMCFILPTIVPWYCWGEAFPQSLFVATFLRYAIVLNATWLVNSAAHLYGYRPYDKTISPRENILVSLGAVGEGFHNYHHTFPYDYSASEYRWHINLTTFFIDCMAALGLAYDRKKVSKAAILARIKRTGDESYKSG.

The Cytoplasmic segment spans residues 1-72; the sequence is MPAHLLQEEI…EGPRPKLEYV (72 aa). Residues 73–93 traverse the membrane as a helical segment; sequence WRNIILMSLLHLGALYGIILI. A substrate-binding site is contributed by asparagine 75. Topologically, residues 94–97 are lumenal; that stretch reads PTCK. A helical membrane pass occupies residues 98–118; the sequence is IYTLLWAFAYYLLSAVGVTAG. Over 119–217 the chain is Cytoplasmic; it reads AHRLWSHRTY…EKLVMFQRRY (99 aa). The Fe cation site is built by histidine 120 and histidine 125. Positions 120–125 match the Histidine box-1 motif; that stretch reads HRLWSH. Asparagine 148, arginine 155, and aspartate 156 together coordinate substrate. Residues histidine 157, histidine 160, and histidine 161 each contribute to the Fe cation site. The Histidine box-2 signature appears at 157-161; it reads HRAHH. Residues arginine 188 and lysine 189 each coordinate substrate. Serine 203 carries the phosphoserine modification. A helical transmembrane segment spans residues 218 to 237; that stretch reads YKPGILLMCFILPTIVPWYC. At 238 to 241 the chain is on the lumenal side; the sequence is WGEA. The chain crosses the membrane as a helical span at residues 242–263; the sequence is FPQSLFVATFLRYAIVLNATWL. Tryptophan 262 is a binding site for substrate. At 264–359 the chain is on the cytoplasmic side; sequence VNSAAHLYGY…RTGDESYKSG (96 aa). Fe cation is bound by residues histidine 269, histidine 298, histidine 301, and histidine 302. A Histidine box-3 motif is present at residues 298–302; that stretch reads HNYHH.

This sequence belongs to the fatty acid desaturase type 1 family. The cofactor is Fe(2+).

It localises to the endoplasmic reticulum membrane. The enzyme catalyses octadecanoyl-CoA + 2 Fe(II)-[cytochrome b5] + O2 + 2 H(+) = (9Z)-octadecenoyl-CoA + 2 Fe(III)-[cytochrome b5] + 2 H2O. The catalysed reaction is hexadecanoyl-CoA + 2 Fe(II)-[cytochrome b5] + O2 + 2 H(+) = (9Z)-hexadecenoyl-CoA + 2 Fe(III)-[cytochrome b5] + 2 H2O. Its function is as follows. Stearoyl-CoA desaturase that utilizes O(2) and electrons from reduced cytochrome b5 to introduce the first double bond into saturated fatty acyl-CoA substrates. Catalyzes the insertion of a cis double bond at the delta-9 position into fatty acyl-CoA substrates including palmitoyl-CoA and stearoyl-CoA. Gives rise to a mixture of 16:1 and 18:1 unsaturated fatty acids. Plays an important role in lipid biosynthesis. Plays an important role in regulating the expression of genes that are involved in lipogenesis and in regulating mitochondrial fatty acid oxidation. Plays an important role in body energy homeostasis. Contributes to the biosynthesis of membrane phospholipids, cholesterol esters and triglycerides. In Sus scrofa (Pig), this protein is Stearoyl-CoA desaturase (SCD).